Reading from the N-terminus, the 328-residue chain is Beta-ketoacyl-[acyl-carrier-protein] synthase III (328 aa).

Residues cysteine 122 and histidine 255 contribute to the active site. An ACP-binding region spans residues glutamine 256–arginine 260. Asparagine 285 is an active-site residue.

This sequence belongs to the thiolase-like superfamily. FabH family. Homodimer.

Its subcellular location is the cytoplasm. The enzyme catalyses malonyl-[ACP] + acetyl-CoA + H(+) = 3-oxobutanoyl-[ACP] + CO2 + CoA. It participates in lipid metabolism; fatty acid biosynthesis. Its function is as follows. Catalyzes the condensation reaction of fatty acid synthesis by the addition to an acyl acceptor of two carbons from malonyl-ACP. Catalyzes the first condensation reaction which initiates fatty acid synthesis and may therefore play a role in governing the total rate of fatty acid production. Possesses both acetoacetyl-ACP synthase and acetyl transacylase activities. Its substrate specificity determines the biosynthesis of branched-chain and/or straight-chain of fatty acids. This chain is Beta-ketoacyl-[acyl-carrier-protein] synthase III, found in Bordetella petrii (strain ATCC BAA-461 / DSM 12804 / CCUG 43448).